A 681-amino-acid polypeptide reads, in one-letter code: Phenylalanine--tRNA ligase beta subunit (681 aa).

Positions 288-363 (PARETVLLRP…RIHGYDQIPE (76 aa)) constitute a B5 domain. Mg(2+) contacts are provided by aspartate 341, aspartate 347, glutamate 350, and glutamate 351. Residues 586-681 (SSFPSIQRDL…EKQLEAVLLR (96 aa)) enclose the FDX-ACB domain.

This sequence belongs to the phenylalanyl-tRNA synthetase beta subunit family. Type 1 subfamily. In terms of assembly, tetramer of two alpha and two beta subunits. Mg(2+) serves as cofactor.

The protein resides in the cytoplasm. It catalyses the reaction tRNA(Phe) + L-phenylalanine + ATP = L-phenylalanyl-tRNA(Phe) + AMP + diphosphate + H(+). This Rhodopirellula baltica (strain DSM 10527 / NCIMB 13988 / SH1) protein is Phenylalanine--tRNA ligase beta subunit.